Consider the following 112-residue polypeptide: Truncated ankyrin repeat protein B25 (112 aa).

The protein belongs to the orthopoxviruses B25 protein family.

This is Truncated ankyrin repeat protein B25 from Bos taurus (Bovine).